The following is a 338-amino-acid chain: Holliday junction branch migration complex subunit RuvB (338 aa).

A large ATPase domain (RuvB-L) region spans residues 1–180; sequence MERLLDNKFS…FGIIERLDYY (180 aa). Residues L19, R20, G61, K64, T65, T66, R170, Y180, and R217 each coordinate ATP. Residue T65 coordinates Mg(2+). The segment at 181–251 is small ATPAse domain (RuvB-S); that stretch reads TVEELSQIVM…VAKSGLEMFE (71 aa). The segment at 254–338 is head domain (RuvB-H); that stretch reads EYGLDLVDRN…FNVKESGDKR (85 aa). DNA-binding residues include K309 and R314.

The protein belongs to the RuvB family. Homohexamer. Forms an RuvA(8)-RuvB(12)-Holliday junction (HJ) complex. HJ DNA is sandwiched between 2 RuvA tetramers; dsDNA enters through RuvA and exits via RuvB. An RuvB hexamer assembles on each DNA strand where it exits the tetramer. Each RuvB hexamer is contacted by two RuvA subunits (via domain III) on 2 adjacent RuvB subunits; this complex drives branch migration. In the full resolvosome a probable DNA-RuvA(4)-RuvB(12)-RuvC(2) complex forms which resolves the HJ.

The protein resides in the cytoplasm. It catalyses the reaction ATP + H2O = ADP + phosphate + H(+). Its function is as follows. The RuvA-RuvB-RuvC complex processes Holliday junction (HJ) DNA during genetic recombination and DNA repair, while the RuvA-RuvB complex plays an important role in the rescue of blocked DNA replication forks via replication fork reversal (RFR). RuvA specifically binds to HJ cruciform DNA, conferring on it an open structure. The RuvB hexamer acts as an ATP-dependent pump, pulling dsDNA into and through the RuvAB complex. RuvB forms 2 homohexamers on either side of HJ DNA bound by 1 or 2 RuvA tetramers; 4 subunits per hexamer contact DNA at a time. Coordinated motions by a converter formed by DNA-disengaged RuvB subunits stimulates ATP hydrolysis and nucleotide exchange. Immobilization of the converter enables RuvB to convert the ATP-contained energy into a lever motion, pulling 2 nucleotides of DNA out of the RuvA tetramer per ATP hydrolyzed, thus driving DNA branch migration. The RuvB motors rotate together with the DNA substrate, which together with the progressing nucleotide cycle form the mechanistic basis for DNA recombination by continuous HJ branch migration. Branch migration allows RuvC to scan DNA until it finds its consensus sequence, where it cleaves and resolves cruciform DNA. The sequence is that of Holliday junction branch migration complex subunit RuvB from Caldicellulosiruptor saccharolyticus (strain ATCC 43494 / DSM 8903 / Tp8T 6331).